The chain runs to 68 residues: Beta-defensin 1 (68 aa).

The N-terminal stretch at 1–21 is a signal peptide; the sequence is MRTSYLLLFTLCLLLSEMASG. Positions 22–32 are excised as a propeptide; sequence DNFLTGLGHRS. Intrachain disulfides connect Cys-37/Cys-66, Cys-44/Cys-59, and Cys-49/Cys-67.

The protein belongs to the beta-defensin family. In terms of assembly, monomer. Homodimer.

The protein localises to the secreted. It is found in the membrane. In terms of biological role, has bactericidal activity. May act as a ligand for C-C chemokine receptor CCR6. Positively regulates the sperm motility and bactericidal activity in a CCR6-dependent manner. Binds to CCR6 and triggers Ca2+ mobilization in the sperm which is important for its motility. The protein is Beta-defensin 1 (DEFB1) of Cercopithecus erythrogaster (Red-bellied monkey).